The sequence spans 374 residues: Protein RecA (374 aa).

66-73 (GPESSGKT) contributes to the ATP binding site. The disordered stretch occupies residues 327–374 (LGVGVHPEESATEPGADAASAAPADAAPAVPAPTTAKATKSKAAAAKS). Over residues 338–374 (TEPGADAASAAPADAAPAVPAPTTAKATKSKAAAAKS) the composition is skewed to low complexity.

This sequence belongs to the RecA family.

The protein localises to the cytoplasm. In terms of biological role, can catalyze the hydrolysis of ATP in the presence of single-stranded DNA, the ATP-dependent uptake of single-stranded DNA by duplex DNA, and the ATP-dependent hybridization of homologous single-stranded DNAs. It interacts with LexA causing its activation and leading to its autocatalytic cleavage. The polypeptide is Protein RecA (Streptomyces lividans).